A 100-amino-acid chain; its full sequence is Urease subunit gamma (100 aa).

It belongs to the urease gamma subunit family. Heterotrimer of UreA (gamma), UreB (beta) and UreC (alpha) subunits. Three heterotrimers associate to form the active enzyme.

Its subcellular location is the cytoplasm. It catalyses the reaction urea + 2 H2O + H(+) = hydrogencarbonate + 2 NH4(+). Its pathway is nitrogen metabolism; urea degradation; CO(2) and NH(3) from urea (urease route): step 1/1. This Pseudomonas entomophila (strain L48) protein is Urease subunit gamma.